A 95-amino-acid polypeptide reads, in one-letter code: Alpha-conotoxin VxXXB (95 aa).

The signal sequence occupies residues 1–24 (MPKLAVVLLVLLILPLSYFDAAGG). Residues 25 to 45 (QAVQGDWRGNRLARDLQRGGR) constitute a propeptide that is removed on maturation. Glu-48 and Glu-50 each carry 4-carboxyglutamate. A 4-hydroxyproline; partial modification is found at Pro-59. 4 disulfides stabilise this stretch: Cys-64-Cys-73, Cys-69-Cys-81, Cys-74-Cys-91, and Cys-79-Cys-93. A 4-hydroxyproline; partial modification is found at Pro-75. A 4-hydroxyproline; partial modification is found at Pro-94. Pro-94 bears the Proline amide; in form [desGly-95]VxXXB mark.

It belongs to the conotoxin D superfamily. As to quaternary structure, homodimer. Pseudo-homodimer (identical sequence, different post-translational modifications). As to expression, expressed by the venom duct.

It is found in the secreted. In terms of biological role, alpha-conotoxins act on postsynaptic membranes, they bind to the nicotinic acetylcholine receptors (nAChR) and thus inhibit them. Through its two C-terminal domains, this homodimeric protein would bind to two nAChR allosteric sites, located outside the nAChR C-loop of the principal binding face and at the adjacent binding interface in a clockwise direction. It specifically blocks mammalian neuronal nAChR of the alpha-7/CHRNA7 (IC(50)=0.4 nM), alpha-3-beta-2/CHRNA3-CHRNB2 (IC(50)=8.4 nM) and alpha-4-beta-2/CHRNA4-CHRNB2 (IC(50)=228 nM) subtypes. It inhibits alpha-7/CHRNA7, alpha-3-beta-2/CHRNA3-CHRNB2 and alpha-4-beta-2/CHRNA4-CHRNB2 nAChR subtypes more efficiently than VxXXA and VxXXC. This chain is Alpha-conotoxin VxXXB, found in Conus vexillum (Flag cone).